Consider the following 239-residue polypeptide: Aspartate/glutamate leucyltransferase (239 aa).

The protein belongs to the R-transferase family. Bpt subfamily.

The protein localises to the cytoplasm. It carries out the reaction N-terminal L-glutamyl-[protein] + L-leucyl-tRNA(Leu) = N-terminal L-leucyl-L-glutamyl-[protein] + tRNA(Leu) + H(+). It catalyses the reaction N-terminal L-aspartyl-[protein] + L-leucyl-tRNA(Leu) = N-terminal L-leucyl-L-aspartyl-[protein] + tRNA(Leu) + H(+). Functions in the N-end rule pathway of protein degradation where it conjugates Leu from its aminoacyl-tRNA to the N-termini of proteins containing an N-terminal aspartate or glutamate. This is Aspartate/glutamate leucyltransferase from Alkalilimnicola ehrlichii (strain ATCC BAA-1101 / DSM 17681 / MLHE-1).